Here is a 571-residue protein sequence, read N- to C-terminus: Putative phospholipase B-like 1 (571 aa).

A signal peptide spans 1-18 (MNWIFIFLAAAVAIGCEA). 4 N-linked (GlcNAc...) asparagine glycosylation sites follow: asparagine 62, asparagine 149, asparagine 442, and asparagine 473.

Belongs to the phospholipase B-like family.

It is found in the lysosome. Functionally, putative phospholipase. This chain is Putative phospholipase B-like 1, found in Caenorhabditis elegans.